The following is a 332-amino-acid chain: Glycerol-3-phosphate dehydrogenase [NAD(P)+] (332 aa).

Residues Ser-11, Trp-12, Arg-32, Arg-33, and Lys-106 each contribute to the NADPH site. Sn-glycerol 3-phosphate contacts are provided by Lys-106 and Gly-136. Residue Ala-140 participates in NADPH binding. Residues Lys-191, Asp-244, Ser-254, Arg-255, and Asn-256 each coordinate sn-glycerol 3-phosphate. Residue Lys-191 is the Proton acceptor of the active site. NADPH is bound at residue Arg-255. Residues Val-280 and Glu-282 each coordinate NADPH.

Belongs to the NAD-dependent glycerol-3-phosphate dehydrogenase family.

The protein localises to the cytoplasm. The catalysed reaction is sn-glycerol 3-phosphate + NAD(+) = dihydroxyacetone phosphate + NADH + H(+). The enzyme catalyses sn-glycerol 3-phosphate + NADP(+) = dihydroxyacetone phosphate + NADPH + H(+). Its pathway is membrane lipid metabolism; glycerophospholipid metabolism. Its function is as follows. Catalyzes the reduction of the glycolytic intermediate dihydroxyacetone phosphate (DHAP) to sn-glycerol 3-phosphate (G3P), the key precursor for phospholipid synthesis. The polypeptide is Glycerol-3-phosphate dehydrogenase [NAD(P)+] (Corynebacterium glutamicum (strain R)).